A 336-amino-acid polypeptide reads, in one-letter code: Phospho-N-acetylmuramoyl-pentapeptide-transferase (336 aa).

10 helical membrane passes run 3–23 (LTLI…PYFI), 53–73 (GGTV…LFSI), 78–98 (SLAL…IGFL), 118–138 (LALQ…PSGI), 143–163 (VFGY…FWVV), 174–194 (GIDG…GVIA), 200–220 (FDVL…FCFN), 226–246 (VFMG…ISIA), 251–271 (WTLL…MLQV), and 316–336 (AFLW…LYVF).

Belongs to the glycosyltransferase 4 family. MraY subfamily. The cofactor is Mg(2+).

It is found in the cell membrane. The catalysed reaction is UDP-N-acetyl-alpha-D-muramoyl-L-alanyl-gamma-D-glutamyl-L-lysyl-D-alanyl-D-alanine + di-trans,octa-cis-undecaprenyl phosphate = Mur2Ac(oyl-L-Ala-gamma-D-Glu-L-Lys-D-Ala-D-Ala)-di-trans,octa-cis-undecaprenyl diphosphate + UMP. The protein operates within cell wall biogenesis; peptidoglycan biosynthesis. In terms of biological role, catalyzes the initial step of the lipid cycle reactions in the biosynthesis of the cell wall peptidoglycan: transfers peptidoglycan precursor phospho-MurNAc-pentapeptide from UDP-MurNAc-pentapeptide onto the lipid carrier undecaprenyl phosphate, yielding undecaprenyl-pyrophosphoryl-MurNAc-pentapeptide, known as lipid I. The chain is Phospho-N-acetylmuramoyl-pentapeptide-transferase from Streptococcus pyogenes serotype M5 (strain Manfredo).